A 182-amino-acid chain; its full sequence is Adenine phosphoribosyltransferase (182 aa).

This sequence belongs to the purine/pyrimidine phosphoribosyltransferase family. Homodimer.

The protein localises to the cytoplasm. It carries out the reaction AMP + diphosphate = 5-phospho-alpha-D-ribose 1-diphosphate + adenine. It functions in the pathway purine metabolism; AMP biosynthesis via salvage pathway; AMP from adenine: step 1/1. Its function is as follows. Catalyzes a salvage reaction resulting in the formation of AMP, that is energically less costly than de novo synthesis. This is Adenine phosphoribosyltransferase from Pseudomonas syringae pv. syringae (strain B728a).